Consider the following 722-residue polypeptide: Fatty acid oxidation complex subunit alpha (722 aa).

The enoyl-CoA hydratase/isomerase stretch occupies residues 1–189 (MIYQGKSLSA…AQGAIDAVVE (189 aa)). Substrate is bound at residue aspartate 296. The 3-hydroxyacyl-CoA dehydrogenase stretch occupies residues 311 to 722 (TKAVNKAAVL…SYFTTDVKLA (412 aa)). NAD(+)-binding positions include methionine 325, aspartate 344, 401–403 (VVE), lysine 408, and serine 430. Histidine 451 (for 3-hydroxyacyl-CoA dehydrogenase activity) is an active-site residue. An NAD(+)-binding site is contributed by asparagine 454. Residues asparagine 501 and tyrosine 661 each contribute to the substrate site.

It in the N-terminal section; belongs to the enoyl-CoA hydratase/isomerase family. This sequence in the C-terminal section; belongs to the 3-hydroxyacyl-CoA dehydrogenase family. As to quaternary structure, heterotetramer of two alpha chains (FadB) and two beta chains (FadA).

It catalyses the reaction a (3S)-3-hydroxyacyl-CoA + NAD(+) = a 3-oxoacyl-CoA + NADH + H(+). The enzyme catalyses a (3S)-3-hydroxyacyl-CoA = a (2E)-enoyl-CoA + H2O. It carries out the reaction a 4-saturated-(3S)-3-hydroxyacyl-CoA = a (3E)-enoyl-CoA + H2O. The catalysed reaction is (3S)-3-hydroxybutanoyl-CoA = (3R)-3-hydroxybutanoyl-CoA. It catalyses the reaction a (3Z)-enoyl-CoA = a 4-saturated (2E)-enoyl-CoA. The enzyme catalyses a (3E)-enoyl-CoA = a 4-saturated (2E)-enoyl-CoA. Its pathway is lipid metabolism; fatty acid beta-oxidation. Its function is as follows. Involved in the aerobic and anaerobic degradation of long-chain fatty acids via beta-oxidation cycle. Catalyzes the formation of 3-oxoacyl-CoA from enoyl-CoA via L-3-hydroxyacyl-CoA. It can also use D-3-hydroxyacyl-CoA and cis-3-enoyl-CoA as substrate. This chain is Fatty acid oxidation complex subunit alpha, found in Colwellia psychrerythraea (strain 34H / ATCC BAA-681) (Vibrio psychroerythus).